The chain runs to 389 residues: Chalcone synthase (389 aa).

Cys164 is an active-site residue.

It belongs to the thiolase-like superfamily. Chalcone/stilbene synthases family.

It carries out the reaction (E)-4-coumaroyl-CoA + 3 malonyl-CoA + 3 H(+) = 2',4,4',6'-tetrahydroxychalcone + 3 CO2 + 4 CoA. It functions in the pathway secondary metabolite biosynthesis; flavonoid biosynthesis. Its function is as follows. The primary product of this enzyme is 4,2',4',6'-tetrahydroxychalcone (also termed naringenin-chalcone or chalcone) which can under specific conditions spontaneously isomerize into naringenin. The polypeptide is Chalcone synthase (CHS) (Pueraria montana var. lobata (Kudzu vine)).